We begin with the raw amino-acid sequence, 761 residues long: Zinc finger protein 711 (761 aa).

5 C2H2-type zinc fingers span residues 383–408 (YPCH…HPDH), 414–436 (YQCT…LESH), 476–499 (HKCK…LAVH), 505–527 (HVCV…MRTH), and 533–556 (FHCQ…KSKH). The segment at 562–584 (FKCGHCPQAFADDKELQRHAEIF) adopts a C2H2-type 6; atypical zinc-finger fold. Positions 564, 567, and 580 each coordinate Zn(2+). 6 consecutive C2H2-type zinc fingers follow at residues 590–613 (HQCP…ISVH), 619–641 (HKCD…SETH), 647–670 (HQCR…LSVH), 676–698 (FKCK…MKTH), 704–727 (YQCQ…ISIH), and 733–755 (HRCD…IMRH).

The protein belongs to the krueppel C2H2-type zinc-finger protein family. Present in ovary and brain but not in other tissues (at protein level).

The protein localises to the nucleus. It localises to the cytoplasm. Functionally, transcription regulator required for brain development. Probably acts as a transcription factor that binds to the promoter of target genes, leading to activate their expression. The sequence is that of Zinc finger protein 711 (znf711) from Danio rerio (Zebrafish).